The sequence spans 294 residues: uncharacterized protein (294 aa).

A Tyrosine-protein phosphatase domain is found at 13 to 151 (QCSQIRPYLY…LIDLEQKLRG (139 aa)). Cys95 (phosphocysteine intermediate) is an active-site residue. Residues 234–294 (PTLLVPSSSS…WRLSFHKDVV (61 aa)) form a disordered region.

Belongs to the protein-tyrosine phosphatase family. Non-receptor class dual specificity subfamily.

This is an uncharacterized protein from Caenorhabditis elegans.